The chain runs to 169 residues: S-ribosylhomocysteine lyase (169 aa).

Fe cation-binding residues include His-54, His-58, and Cys-129.

The protein belongs to the LuxS family. As to quaternary structure, homodimer. It depends on Fe cation as a cofactor.

The enzyme catalyses S-(5-deoxy-D-ribos-5-yl)-L-homocysteine = (S)-4,5-dihydroxypentane-2,3-dione + L-homocysteine. Its function is as follows. Involved in the synthesis of autoinducer 2 (AI-2) which is secreted by bacteria and is used to communicate both the cell density and the metabolic potential of the environment. The regulation of gene expression in response to changes in cell density is called quorum sensing. Catalyzes the transformation of S-ribosylhomocysteine (RHC) to homocysteine (HC) and 4,5-dihydroxy-2,3-pentadione (DPD). The chain is S-ribosylhomocysteine lyase from Actinobacillus pleuropneumoniae serotype 5b (strain L20).